The following is a 999-amino-acid chain: Hypoxia up-regulated protein 1 (999 aa).

The first 32 residues, 1–32, serve as a signal peptide directing secretion; it reads MAATVRRQRPRRLLCWALVAVLLADLLALSDT. Residues Asn-155, Asn-222, and Asn-515 are each glycosylated (N-linked (GlcNAc...) asparagine). Residues 564 to 694 form a disordered region; that stretch reads VEDSPEEEST…KKQKPARKQK (131 aa). Position 567 is a phosphoserine (Ser-567). Over residues 574–583 the composition is skewed to polar residues; sequence LTKLGNTISS. N-linked (GlcNAc...) asparagine glycosylation is present at Asn-596. Composition is skewed to basic and acidic residues over residues 611–626 and 641–668; these read GSKDEPAEQGELKEEA and PKGDAAREGETPDEKESGDKSEAQKPNE. 3 N-linked (GlcNAc...) asparagine glycosylation sites follow: Asn-830, Asn-862, and Asn-869. Lys-883 carries the N6-acetyllysine modification. Residues 909–999 form a disordered region; that stretch reads AKFTKPRPRP…QKRPLKNDEL (91 aa). N-linked (GlcNAc...) asparagine glycosylation is found at Asn-922 and Asn-931. Residues 949–962 are compositionally biased toward basic and acidic residues; it reads EEAKAILEPDKEGL. Positions 996-999 match the Prevents secretion from ER motif; the sequence is NDEL.

This sequence belongs to the heat shock protein 70 family. In terms of assembly, part of a large chaperone multiprotein complex comprising DNAJB11, HSP90B1, HSPA5, HYOU, PDIA2, PDIA4, PDIA6, PPIB, SDF2L1, UGGT1 and very small amounts of ERP29, but not, or at very low levels, CALR nor CANX. In terms of tissue distribution, selectively expressed by cultured astrocytes but not endothelial cells, microglia or neurons.

It is found in the endoplasmic reticulum lumen. Its function is as follows. Has a pivotal role in cytoprotective cellular mechanisms triggered by oxygen deprivation. Promotes HSPA5/BiP-mediated ATP nucleotide exchange and thereby activates the unfolded protein response (UPR) pathway in the presence of endoplasmic reticulum stress. May play a role as a molecular chaperone and participate in protein folding. This chain is Hypoxia up-regulated protein 1 (Hyou1), found in Rattus norvegicus (Rat).